Consider the following 140-residue polypeptide: ATP synthase epsilon chain (140 aa).

The protein belongs to the ATPase epsilon chain family. As to quaternary structure, F-type ATPases have 2 components, CF(1) - the catalytic core - and CF(0) - the membrane proton channel. CF(1) has five subunits: alpha(3), beta(3), gamma(1), delta(1), epsilon(1). CF(0) has three main subunits: a, b and c.

Its subcellular location is the cell inner membrane. Its function is as follows. Produces ATP from ADP in the presence of a proton gradient across the membrane. This chain is ATP synthase epsilon chain, found in Neisseria meningitidis serogroup C / serotype 2a (strain ATCC 700532 / DSM 15464 / FAM18).